Consider the following 339-residue polypeptide: ATPase GET3 (339 aa).

An ATP-binding site is contributed by 37 to 44 (KGGVGKTT). Aspartate 66 is an active-site residue. Residues glutamate 237 and asparagine 264 each coordinate ATP. Cysteine 275 and cysteine 278 together coordinate Zn(2+).

This sequence belongs to the arsA ATPase family. As to quaternary structure, homodimer.

The protein resides in the cytoplasm. The protein localises to the endoplasmic reticulum. Its function is as follows. ATPase required for the post-translational delivery of tail-anchored (TA) proteins to the endoplasmic reticulum. Recognizes and selectively binds the transmembrane domain of TA proteins in the cytosol. This complex then targets to the endoplasmic reticulum by membrane-bound receptors, where the tail-anchored protein is released for insertion. This process is regulated by ATP binding and hydrolysis. ATP binding drives the homodimer towards the closed dimer state, facilitating recognition of newly synthesized TA membrane proteins. ATP hydrolysis is required for insertion. Subsequently, the homodimer reverts towards the open dimer state, lowering its affinity for the membrane-bound receptor, and returning it to the cytosol to initiate a new round of targeting. The polypeptide is ATPase GET3 (Rhodotorula glutinis (Yeast)).